The sequence spans 400 residues: MIIKPRIRGFICTTTHPVGCEQNVKEQIALTKAQGPIANAPKRVLVVGSSSGYGLSSRITAAFGGGASTIGVFFEKAGTEKKPGTAGWYNSAAFDKFAKEEGLYSKSLNGDAFSNEAKQKTIDLIKEDLGQIDMVVYSLASPVRKMPETGEVIRSSLKPIGETYTATAVDTNKDAIIEASVEPATEQEIKDTVTVMGGEDWELWINALSEAGVLADGCKTVAYSYIGTELTWPIYWDGALGQAKMDLDRAATALNEKLSATGGTANVAVLKSVVTQASSAIPVMPLYIAMVFKKMREEGVHEGCQEQILRMFSQRLYKADGSAAEVDEKNRLRLDDWELREDIQQHCRDLWPQVTTENLKDLTDYVEYKEEFLKLFGFGVDGVDYDADVNPEVNFDVADI.

Residues 48 to 53, 74 to 75, 111 to 112, and 139 to 140 contribute to the NAD(+) site; these read GSSSGY, FE, DA, and LA. Tyr-225 contributes to the substrate binding site. Tyr-235 (proton donor) is an active-site residue. Residues Lys-244 and 273 to 275 each bind NAD(+); that span reads VVT.

The protein belongs to the TER reductase family. In terms of assembly, monomer.

It carries out the reaction a 2,3-saturated acyl-[ACP] + NAD(+) = a (2E)-enoyl-[ACP] + NADH + H(+). It participates in lipid metabolism; fatty acid biosynthesis. In terms of biological role, involved in the final reduction of the elongation cycle of fatty acid synthesis (FAS II). Catalyzes the reduction of a carbon-carbon double bond in an enoyl moiety that is covalently linked to an acyl carrier protein (ACP). This Aliivibrio fischeri (strain ATCC 700601 / ES114) (Vibrio fischeri) protein is Enoyl-[acyl-carrier-protein] reductase [NADH].